The following is a 1081-amino-acid chain: FHF complex subunit HOOK-interacting protein 1A (1081 aa).

4 disordered regions span residues 474-496 (SEEQLLPETPCSPSSPSPPPPPA), 544-623 (PETF…DPPK), 658-770 (EKDT…ENEP), and 863-883 (EAGSSPFGVGEDTAFSSRHPV). The segment covering 486–496 (PSSPSPPPPPA) has biased composition (pro residues). The span at 553–564 (EESRENSGHPEA) shows a compositional bias: basic and acidic residues. The span at 567-576 (PQQSVRTSGQ) shows a compositional bias: polar residues. Over residues 680–707 (EPLEDTSEQQEDTSEQLEDTSELQEDTA) the composition is skewed to acidic residues. Composition is skewed to polar residues over residues 727-738 (EAQSLPTSNGPL) and 746-762 (ESQPSRESSDLCQNTFS).

The protein belongs to the FHIP family. In terms of assembly, may be a component of the FTS/Hook/FHIP complex (FHF complex), composed of AKTIP/FTS, FHIP1B, and one or more members of the Hook family of proteins HOOK1, HOOK2, and HOOK3. May interact directly with AKTIP/FTS.

Probable component of the FTS/Hook/FHIP complex (FHF complex). FHF complex promotes the distribution of AP-4 complex to the perinuclear area of the cell. In Mus musculus (Mouse), this protein is FHF complex subunit HOOK-interacting protein 1A.